A 626-amino-acid chain; its full sequence is MPSATAAKAKKANANANLKSKVNKAPAVTEIDEQSGHSEDESDFGSELDVEDESAASDEEDEDEDEDEHDLEEGVSDEGEGVSDEEEGVSDEDEDEENQSAGSGSDSDSDSLDSDAPRKRRRTSPTIDDIVTQLEDEEEDDTPVAPVKPVFNNVPSRIKKKQAEAPKTEKTEEATPALPVPEPASTVSVPIDANTTFDALNVRPWLVQSLANMAIKRPTGIQKGCIPEILKGRDCIGGSRTGSGKTVAFAVPILQQWAANPSAIFGVILTPTRELALQIMEQVIALSQPHVLKAVLITGGADMRKQAIDLAKRPHLVIATPGRLADHIRTSGEDTICGLRRVKFIVLDEADRLLANSGHGSMLPDVEECFSVLPPPSERQTLLFTATMTPEVKALSERPPIPGRAPVFVCEVDTQRLAIPATLRQMHLQVPVTHREHYLHMFLLTPQNVDKSVIIFCNRTSTADFLHHLLRLLDHRVTSLHSKLPQSQRIDNLGRFRASAARILVATDVAARGLDIPEVKIVINYDIPRDPDDYIHRVGRTARAGRKGDAVTFVGQRDVDLVLAIEQRVGRQMEAWTEEGVNLETRVIRDALKVVGEKKREALLEIEEQKEVGGKRKRGKEKLRAM.

Positions 1–25 (MPSATAAKAKKANANANLKSKVNKA) are enriched in low complexity. Residues 1–183 (MPSATAAKAK…ATPALPVPEP (183 aa)) are disordered. Residues 40-98 (DESDFGSELDVEDESAASDEEDEDEDEDEHDLEEGVSDEGEGVSDEEEGVSDEDEDEEN) show a composition bias toward acidic residues. Basic and acidic residues predominate over residues 161-173 (KQAEAPKTEKTEE). Positions 195 to 223 (TTFDALNVRPWLVQSLANMAIKRPTGIQK) match the Q motif motif. One can recognise a Helicase ATP-binding domain in the interval 226 to 406 (IPEILKGRDC…ERPPIPGRAP (181 aa)). Residue 239–246 (SRTGSGKT) participates in ATP binding. A DEAD box motif is present at residues 348-351 (DEAD). The Helicase C-terminal domain occupies 438–589 (YLHMFLLTPQ…GVNLETRVIR (152 aa)).

This sequence belongs to the DEAD box helicase family. DDX49/DBP8 subfamily.

The protein resides in the nucleus. It is found in the nucleolus. The enzyme catalyses ATP + H2O = ADP + phosphate + H(+). ATP-binding RNA helicase involved in 40S ribosomal subunit biogenesis and is required for the normal formation of 18S rRNAs through pre-rRNA processing at A0, A1 and A2 sites. Required for vegetative growth. The chain is ATP-dependent RNA helicase dbp-8 (dbp-8) from Neurospora crassa (strain ATCC 24698 / 74-OR23-1A / CBS 708.71 / DSM 1257 / FGSC 987).